The sequence spans 560 residues: SWI/SNF complex subunit SWI3A homolog (560 aa).

Low complexity predominate over residues 1–13 (MSPPVAGAASSGD). Positions 1-22 (MSPPVAGAASSGDGPPGRPPRE) are disordered. One can recognise an SWIRM domain in the interval 24–127 (YTIPASSGWF…FSASPSRPEA (104 aa)). Positions 242 to 293 (HSSSAWTDAETLLLLEGVLKHGDDWDLIAQHVRTKNKSECIARLIQLPFGEH) constitute an SANT domain. Positions 311-330 (TTDGKVNKSTVKESSSQPTE) are enriched in polar residues. 2 disordered regions span residues 311–352 (TTDG…EEHP) and 414–445 (QTRA…PDKK). Residues 331–342 (TVDDMQIDGNED) are compositionally biased toward acidic residues. Composition is skewed to basic and acidic residues over residues 343–352 (GADKSVEEHP) and 424–445 (RQSD…PDKK).

As to quaternary structure, interacts with LFR.

The protein localises to the nucleus. Component of a multiprotein complex equivalent of the SWI/SNF complex, an ATP-dependent chromatin-remodeling complex, which is required for the positive and negative regulation of gene expression of a large number of genes. It changes chromatin structure by altering DNA-histone contacts within a nucleosome, leading eventually to a change in nucleosome position, thus facilitating or repressing binding of gene-specific transcription factors. This chain is SWI/SNF complex subunit SWI3A homolog, found in Oryza sativa subsp. japonica (Rice).